A 241-amino-acid polypeptide reads, in one-letter code: Large ribosomal subunit protein uL3 (241 aa).

It belongs to the universal ribosomal protein uL3 family. Part of the 50S ribosomal subunit. Forms a cluster with proteins L14 and L19.

One of the primary rRNA binding proteins, it binds directly near the 3'-end of the 23S rRNA, where it nucleates assembly of the 50S subunit. The sequence is that of Large ribosomal subunit protein uL3 from Aquifex aeolicus (strain VF5).